Reading from the N-terminus, the 234-residue chain is Transcriptional regulatory protein CseB (234 aa).

The region spanning 6–119 is the Response regulatory domain; that stretch reads HVLFVEDDDV…VLVARIRAVL (114 aa). Asp55 carries the 4-aspartylphosphate modification. The segment at residues 140-234 is a DNA-binding region (ompR/PhoB-type); the sequence is GGVLTFGDLE…VRGFGYKLKA (95 aa).

In terms of processing, phosphorylated by CseC.

Its subcellular location is the cytoplasm. Member of the two-component regulatory system CseB/CseC involved in the stability of the cell envelope. CseB activates transcription of RNA polymerase sigma-E factor, in response to changes in the cell envelope. This is Transcriptional regulatory protein CseB (cseB) from Streptomyces coelicolor (strain ATCC BAA-471 / A3(2) / M145).